A 541-amino-acid polypeptide reads, in one-letter code: Chaperonin GroEL (541 aa).

ATP-binding positions include 29–32 (TLGP), 86–90 (DGTTT), G413, 477–479 (DAL), and D493.

It belongs to the chaperonin (HSP60) family. Forms a cylinder of 14 subunits composed of two heptameric rings stacked back-to-back. Interacts with the co-chaperonin GroES.

Its subcellular location is the cytoplasm. The catalysed reaction is ATP + H2O + a folded polypeptide = ADP + phosphate + an unfolded polypeptide.. In terms of biological role, together with its co-chaperonin GroES, plays an essential role in assisting protein folding. The GroEL-GroES system forms a nano-cage that allows encapsulation of the non-native substrate proteins and provides a physical environment optimized to promote and accelerate protein folding. The polypeptide is Chaperonin GroEL (Clostridium botulinum (strain ATCC 19397 / Type A)).